A 227-amino-acid chain; its full sequence is MFEDIKLIAFDLDGTLLDSVPDLARAVDLAMQDMGYPRVTLEQASHWIGNGADVLVSRALSQNYIVKDDLDAELIKQARARLDQHYHDGGHQLSHLYPDVKDTLERLHQQGYTLALVTNKPSQFVPELLEQHQLTHLFSEVIGGDTFAEKKPNPFALNWLLDKHGLTAPQMLMVGDSKNDIQAAQAAGCHSFALTYGYNHGEPISDSQPDVVSDEFKYLLAVLSMAR.

D11 serves as the catalytic Nucleophile. Positions 11, 13, and 176 each coordinate Mg(2+).

It belongs to the HAD-like hydrolase superfamily. CbbY/CbbZ/Gph/YieH family. Mg(2+) is required as a cofactor.

The enzyme catalyses 2-phosphoglycolate + H2O = glycolate + phosphate. Its pathway is organic acid metabolism; glycolate biosynthesis; glycolate from 2-phosphoglycolate: step 1/1. Functionally, specifically catalyzes the dephosphorylation of 2-phosphoglycolate. Is involved in the dissimilation of the intracellular 2-phosphoglycolate formed during the DNA repair of 3'-phosphoglycolate ends, a major class of DNA lesions induced by oxidative stress. This Aliivibrio fischeri (strain ATCC 700601 / ES114) (Vibrio fischeri) protein is Phosphoglycolate phosphatase.